Consider the following 107-residue polypeptide: Flagellar hook-basal body complex protein FliE (107 aa).

Belongs to the FliE family.

The protein localises to the bacterial flagellum basal body. This is Flagellar hook-basal body complex protein FliE from Mesorhizobium japonicum (strain LMG 29417 / CECT 9101 / MAFF 303099) (Mesorhizobium loti (strain MAFF 303099)).